A 300-amino-acid chain; its full sequence is Tyrosine recombinase XerC (300 aa).

One can recognise a Core-binding (CB) domain in the interval 4–90; that stretch reads VALSLDVSRF…ALRSFFDWLV (87 aa). The region spanning 111 to 290 is the Tyr recombinase domain; sequence HLPKNIDVDD…DFQHLASVYD (180 aa). Residues Arg-150, Lys-174, His-242, Arg-245, and His-268 contribute to the active site. Catalysis depends on Tyr-277, which acts as the O-(3'-phospho-DNA)-tyrosine intermediate.

It belongs to the 'phage' integrase family. XerC subfamily. As to quaternary structure, forms a cyclic heterotetrameric complex composed of two molecules of XerC and two molecules of XerD, in which XerC interacts with XerD via its C-terminal region, XerD interacts with XerC via its C-terminal region and so on.

Its subcellular location is the cytoplasm. FtsK may regulate the catalytic switch between XerC and XerD in the heterotetrameric complex during the two steps of the recombination process. In terms of biological role, site-specific tyrosine recombinase, which acts by catalyzing the cutting and rejoining of the recombining DNA molecules. Binds cooperatively to specific DNA consensus sequences that are separated from XerD binding sites by a short central region, forming the heterotetrameric XerC-XerD complex that recombines DNA substrates. The complex is essential to convert dimers of the bacterial chromosome into monomers to permit their segregation at cell division. It also contributes to the segregational stability of plasmids. In the complex XerC specifically exchanges the top DNA strands. The polypeptide is Tyrosine recombinase XerC (Salmonella typhi).